Consider the following 185-residue polypeptide: Pyruvate/ketoisovalerate oxidoreductases common subunit gamma (185 aa).

Heterotetramer of one alpha, one beta, one delta and one gamma chain.

It catalyses the reaction 2 oxidized [2Fe-2S]-[ferredoxin] + pyruvate + CoA = 2 reduced [2Fe-2S]-[ferredoxin] + acetyl-CoA + CO2 + H(+). It carries out the reaction 3-methyl-2-oxobutanoate + 2 oxidized [2Fe-2S]-[ferredoxin] + CoA = 2-methylpropanoyl-CoA + 2 reduced [2Fe-2S]-[ferredoxin] + CO2 + H(+). This Thermococcus kodakarensis (strain ATCC BAA-918 / JCM 12380 / KOD1) (Pyrococcus kodakaraensis (strain KOD1)) protein is Pyruvate/ketoisovalerate oxidoreductases common subunit gamma (porG).